Consider the following 74-residue polypeptide: Putative ribosome-binding protein YbzG (74 aa).

This is Putative ribosome-binding protein YbzG (ybzG) from Bacillus subtilis (strain 168).